The sequence spans 230 residues: Demethylmenaquinone methyltransferase (230 aa).

S-adenosyl-L-methionine is bound by residues T62, D80, 100–101 (DA), and S117.

The protein belongs to the class I-like SAM-binding methyltransferase superfamily. MenG/UbiE family.

The catalysed reaction is a 2-demethylmenaquinol + S-adenosyl-L-methionine = a menaquinol + S-adenosyl-L-homocysteine + H(+). Its pathway is quinol/quinone metabolism; menaquinone biosynthesis; menaquinol from 1,4-dihydroxy-2-naphthoate: step 2/2. Functionally, methyltransferase required for the conversion of demethylmenaquinol (DMKH2) to menaquinol (MKH2). This Mycobacterium sp. (strain KMS) protein is Demethylmenaquinone methyltransferase.